The primary structure comprises 252 residues: Putative cytosolic acyl coenzyme A thioester hydrolase-like (252 aa).

HotDog ACOT-type domains lie at M1–T90 and S146–T252.

As to quaternary structure, homodimer. In terms of tissue distribution, expressed in all tissues examined. Up-regulated in nasopharyngeal carcinoma (at protein level).

The protein resides in the cytoplasm. The catalysed reaction is hexadecanoyl-CoA + H2O = hexadecanoate + CoA + H(+). In terms of biological role, acyl-CoA thioesterases are a group of enzymes that catalyze the hydrolysis of acyl-CoAs to the free fatty acid and coenzyme A (CoASH), providing the potential to regulate intracellular levels of acyl-CoAs, free fatty acids and CoASH. The polypeptide is Putative cytosolic acyl coenzyme A thioester hydrolase-like (ACOT7L) (Homo sapiens (Human)).